A 1040-amino-acid polypeptide reads, in one-letter code: Multidrug resistance protein MdtB (1040 aa).

Transmembrane regions (helical) follow at residues 16–36, 347–367, 369–389, 396–416, 440–460, 472–492, 537–557, 863–883, 888–908, 911–931, 968–988, and 998–1018; these read FIMR…AGII, LMMA…NIPA, IIPG…MVFL, LTLM…IVVI, IGFT…PLLF, FAIT…TLTP, WLTL…WVFI, LGST…VLGI, FIHP…ALLA, IAGS…IGIV, ILMT…STGV, and IGMV…TPVI.

This sequence belongs to the resistance-nodulation-cell division (RND) (TC 2.A.6) family. MdtB subfamily. In terms of assembly, part of a tripartite efflux system composed of MdtA, MdtB and MdtC. MdtB forms a heteromultimer with MdtC.

Its subcellular location is the cell inner membrane. In terms of biological role, the MdtABC tripartite complex confers resistance against novobiocin and deoxycholate. The polypeptide is Multidrug resistance protein MdtB (Escherichia coli O9:H4 (strain HS)).